Here is a 272-residue protein sequence, read N- to C-terminus: Dermonecrotic toxin SpeSicTox-betaIB1b (272 aa).

The active site involves His5. 2 residues coordinate Mg(2+): Glu25 and Asp27. His41 serves as the catalytic Nucleophile. 2 cysteine pairs are disulfide-bonded: Cys45-Cys51 and Cys47-Cys191. Asp85 is a binding site for Mg(2+).

The protein belongs to the arthropod phospholipase D family. Class II subfamily. It depends on Mg(2+) as a cofactor. As to expression, expressed by the venom gland.

Its subcellular location is the secreted. The catalysed reaction is an N-(acyl)-sphingosylphosphocholine = an N-(acyl)-sphingosyl-1,3-cyclic phosphate + choline. It catalyses the reaction an N-(acyl)-sphingosylphosphoethanolamine = an N-(acyl)-sphingosyl-1,3-cyclic phosphate + ethanolamine. It carries out the reaction a 1-acyl-sn-glycero-3-phosphocholine = a 1-acyl-sn-glycero-2,3-cyclic phosphate + choline. The enzyme catalyses a 1-acyl-sn-glycero-3-phosphoethanolamine = a 1-acyl-sn-glycero-2,3-cyclic phosphate + ethanolamine. Dermonecrotic toxins cleave the phosphodiester linkage between the phosphate and headgroup of certain phospholipids (sphingolipid and lysolipid substrates), forming an alcohol (often choline) and a cyclic phosphate. This toxin acts on sphingomyelin (SM). It may also act on ceramide phosphoethanolamine (CPE), lysophosphatidylcholine (LPC) and lysophosphatidylethanolamine (LPE), but not on lysophosphatidylserine (LPS), and lysophosphatidylglycerol (LPG). It acts by transphosphatidylation, releasing exclusively cyclic phosphate products as second products. Induces dermonecrosis, hemolysis, increased vascular permeability, edema, inflammatory response, and platelet aggregation. The chain is Dermonecrotic toxin SpeSicTox-betaIB1b from Sicarius peruensis (Six-eyed sand spider).